Reading from the N-terminus, the 157-residue chain is Phosphopantetheine adenylyltransferase (157 aa).

A substrate-binding site is contributed by Ser8. ATP is bound by residues 8–9 (SF) and His16. Residues Lys40, Thr72, and Arg86 each contribute to the substrate site. Residues 87 to 89 (GLR), Glu97, and 122 to 128 (YSFLSSS) contribute to the ATP site.

This sequence belongs to the bacterial CoaD family. Homohexamer. Mg(2+) serves as cofactor.

It is found in the cytoplasm. It catalyses the reaction (R)-4'-phosphopantetheine + ATP + H(+) = 3'-dephospho-CoA + diphosphate. Its pathway is cofactor biosynthesis; coenzyme A biosynthesis; CoA from (R)-pantothenate: step 4/5. Functionally, reversibly transfers an adenylyl group from ATP to 4'-phosphopantetheine, yielding dephospho-CoA (dPCoA) and pyrophosphate. The chain is Phosphopantetheine adenylyltransferase from Gloeothece citriformis (strain PCC 7424) (Cyanothece sp. (strain PCC 7424)).